A 297-amino-acid chain; its full sequence is uncharacterized protein (297 aa).

An HTH araC/xylS-type domain is found at 187-285 (EKLIATLHAS…GYAPSAVLKN (99 aa)). 2 consecutive DNA-binding regions (H-T-H motif) follow at residues 204-225 (ADMAATIPCSEAWLRRLFLRYT) and 252-275 (VGEVADTLNFFDSFHFSKAFKHKF).

This is an uncharacterized protein from Escherichia coli (strain K12).